We begin with the raw amino-acid sequence, 84 residues long: Acetylcholine receptor subunit alpha (84 aa).

An intrachain disulfide couples Cys7 to Cys21. Asn20 and Asn66 each carry an N-linked (GlcNAc...) asparagine glycan. A disulfide bond links Cys71 and Cys72.

This sequence belongs to the ligand-gated ion channel (TC 1.A.9) family. Acetylcholine receptor (TC 1.A.9.1) subfamily. Alpha-1/CHRNA1 sub-subfamily. As to quaternary structure, one of the alpha chains that assemble within the acetylcholine receptor, a pentamer of two alpha chains, a beta, a delta, and a gamma (in immature muscle) or epsilon (in mature muscle) chains. The muscle heteropentamer composed of alpha-1, beta-1, delta, epsilon subunits interacts with the alpha-conotoxin ImII.

The protein resides in the postsynaptic cell membrane. It is found in the cell membrane. The catalysed reaction is K(+)(in) = K(+)(out). It carries out the reaction Na(+)(in) = Na(+)(out). Functionally, upon acetylcholine binding, the AChR responds by an extensive change in conformation that affects all subunits and leads to opening of an ion-conducting channel across the plasma membrane. The sequence is that of Acetylcholine receptor subunit alpha (CHRNA1) from Herpestes ichneumon (Egyptian mongoose).